The chain runs to 1325 residues: Sperm-specific sodium:proton exchanger (1325 aa).

Positions 1-29 (MKKRVVKLRELVPAVAALAVAVLIQSATG) are cleaved as a signal peptide. The tract at residues 28-68 (TGSSGGSGHTPTTQATHADDHDLTTHNGTEEHDDGHDDGHD) is disordered. The Extracellular portion of the chain corresponds to 30–76 (SSGGSGHTPTTQATHADDHDLTTHNGTEEHDDGHDDGHDDLHAHAPK). The segment covering 44-68 (HADDHDLTTHNGTEEHDDGHDDGHD) has biased composition (basic and acidic residues). H73 serves as a coordination point for a 1,2-diacylglycero-3-phosphate. Residues 77–96 (VIVFISGSCLFGAISRSLFK) traverse the membrane as a helical segment. At 97–101 (KLPIP) the chain is on the cytoplasmic side. Residues 102–119 (YTVVLLILGAILGVVASN) form a helical membrane-spanning segment. Over 120-135 (VPLVEEHTRDVAHMDP) the chain is Extracellular. The chain crosses the membrane as a helical span at residues 136 to 152 (HVLLQIFLPVLIFESAF). Residues 153–162 (AMDVHTFMRS) lie on the Cytoplasmic side of the membrane. Residues 163-188 (FSQVCILALFGLVVASVLTAVLAMNL) traverse the membrane as a helical segment. Positions 163-250 (FSQVCILALF…AIVIFNVFMK (88 aa)) are transport core domain. The Extracellular portion of the chain corresponds to 189–194 (FNYNWN). A helical transmembrane segment spans residues 195–220 (FSEAMMFGAIMSATDPVAVVALLKDL). Residues 221-223 (GAS) are Cytoplasmic-facing. The helical transmembrane segment at 224 to 249 (KQLGTIIEGESLLNDGCAIVIFNVFM) threads the bilayer. The Essential for sodium:proton exchange signature appears at 237 to 238 (ND). Over 250–260 (KMVFFPQLTST) the chain is Extracellular. The helical transmembrane segment at 261-292 (VGQNVLYFLQVAVAGPLWGYAVAKVTVFFLSH) threads the bilayer. The Cytoplasmic segment spans residues 293-296 (IFND). A helical transmembrane segment spans residues 297–319 (ALVEITITLAATYLTYYIGDIWL). Topologically, residues 320–322 (EVS) are extracellular. The helical transmembrane segment at 323 to 336 (GVLAVVVLGLIVNA) threads the bilayer. The Cytoplasmic portion of the chain corresponds to 337–343 (EKTSISP). A helical membrane pass occupies residues 344–377 (EVEVFLHRFWEMLAYLANTLIFMMVGVVVTQKAL). Over 378-382 (VAVDK) the chain is Extracellular. A helical transmembrane segment spans residues 383 to 412 (MDWFYLIILYLAITIIRGMVISLFSPILSR). The transport core domain stretch occupies residues 383 to 481 (MDWFYLIILY…TTIQTLLRIL (99 aa)). Residues 413–418 (IGYGLT) are Cytoplasmic-facing. The helical transmembrane segment at 419-446 (WRNAVIMTWGGLRGAVGLALALVVENLA) threads the bilayer. The Extracellular portion of the chain corresponds to 447–450 (GNDV). A helical membrane pass occupies residues 451–481 (IGSKFLFHTAGIVVLTLVINATTIQTLLRIL). The Cytoplasmic portion of the chain corresponds to 482–677 (GMSDISIPKR…GKLMYKICHH (196 aa)). The segment at 575–620 (FADMMEEARLRMLKAEKISYWKQFEHGMLAREALRLLVQHAEVAAD) is interacts with the S4 segment of voltage sensor domain. Residues 605-620 (REALRLLVQHAEVAAD) are interacts with the transport core domain; can lock the transporter in the inward conformation. A helical transmembrane segment spans residues 678-708 (MAFEVTINIAIVLNIVPIIMEFVVQDKMASV). Residues 709-724 (STMAAPGSTVSSEPSS) lie on the Extracellular side of the membrane. Residues 725–752 (LQKIEDALRISNYVFFVIYAIEAIVKIL) traverse the membrane as a helical segment. Residues 753 to 760 (GLGRHYIV) are Cytoplasmic-facing. A helical transmembrane segment spans residues 761–784 (SHWNKFDAFILVVALVDIIIAETL). At 785–795 (LKGSITINLSS) the chain is on the extracellular side. Residues 796–822 (IKVVKLFRLLRGLRMLRLTKALIPKLI) form a helical membrane-spanning segment. The segment at 796 to 857 (IKVVKLFRLL…EEVGKIIDRM (62 aa)) is S4 segment of voltage sensor domain. Residues 823-1325 (LVVNGKINNQ…EEGAAPRVNV (503 aa)) are Cytoplasmic-facing. The tract at residues 860 to 919 (NKKILRELKHISETGRLQVVKELGLLQREHPGIAVSVKTRQAIRTILNHSRETIHELQGA) is interacts with the S4 segment of voltage sensor domain. Residues 968-1068 (KLIDFIKARA…CETTVQVYFI (101 aa)) are cNMP-binding domain. G1043 is a binding site for 3',5'-cyclic AMP. 3',5'-cyclic GMP-binding residues include G1043, E1044, and M1045. M1045, G1046, R1053, and N1054 together coordinate 3',5'-cyclic AMP. The 3',5'-cyclic GMP site is built by R1053 and N1054. The segment at 1237–1325 (MLSRKSSGAA…EEGAAPRVNV (89 aa)) is disordered. A compositionally biased stretch (low complexity) spans 1266–1280 (VSPSVPTKTTPKPKS).

The protein belongs to the monovalent cation:proton antiporter 1 (CPA1) transporter (TC 2.A.36) family. As to quaternary structure, homodimer; the dimerization is stabilized in the presence of phosphatidic acids.

It localises to the cell projection. The protein localises to the cilium. Its subcellular location is the flagellum membrane. It carries out the reaction Na(+)(in) + H(+)(out) = Na(+)(out) + H(+)(in). Its activity is regulated as follows. Gated by voltage and stimulated by cyclic nucleotides which shift the activation voltage closer to resting membrane potential. Not inhibited by common sodium:proton exchanger inhibitors such as amiloride. Its function is as follows. Electroneutral sodium:proton antiporter that regulates intracellular pH of sperm along with capacitation and fertility. Activated in response to egg-derived chemoattractants, couples membrane voltage to sodium:proton exchange and transduces membrane hyperpolarization to cytoplasmic alkalization to cAMP signaling and ultimately to sperm motility. This chain is Sperm-specific sodium:proton exchanger, found in Strongylocentrotus purpuratus (Purple sea urchin).